A 21-amino-acid chain; its full sequence is Cupiennin-6d (21 aa).

Serine 21 is modified (serine amide).

In terms of tissue distribution, expressed by the venom gland.

It is found in the secreted. In Cupiennius salei (American wandering spider), this protein is Cupiennin-6d.